Reading from the N-terminus, the 372-residue chain is DNA replication and repair protein RecF (372 aa).

Residue G30–T37 coordinates ATP.

The protein belongs to the RecF family.

Its subcellular location is the cytoplasm. Its function is as follows. The RecF protein is involved in DNA metabolism; it is required for DNA replication and normal SOS inducibility. RecF binds preferentially to single-stranded, linear DNA. It also seems to bind ATP. The sequence is that of DNA replication and repair protein RecF from Exiguobacterium sp. (strain ATCC BAA-1283 / AT1b).